The chain runs to 364 residues: Very-long-chain (3R)-3-hydroxyacyl-CoA dehydratase 3 (364 aa).

The Cytoplasmic portion of the chain corresponds to 1–151 (MAMENQVLTP…ETLTNLRKGY (151 aa)). A CS domain is found at 7 to 96 (VLTPHVYWAQ…KVSQWWERLT (90 aa)). At Thr-9 the chain carries Phosphothreonine. The stretch at 113–138 (LDESDAEMELRAKEEERLNKLRLESE) forms a coiled coil. Phosphoserine occurs at positions 116 and 137. Residues 152-172 (LFMYNLVQFLGFSWIFVNLTV) traverse the membrane as a helical segment. Over 173 to 191 (RFCILGKESFYDTFHTVAD) the chain is Lumenal. The helical transmembrane segment at 192–212 (MMYFCQMLAVVETINAAIGVT) threads the bilayer. The Cytoplasmic segment spans residues 213–214 (TS). A helical transmembrane segment spans residues 215-235 (PVLPSLIQLLGRNFILFIIFG). Over 236 to 244 (TMEEMQNKA) the chain is Lumenal. A helical membrane pass occupies residues 245 to 265 (VVFFVFYLWSAIEIFRYSFYM). Over 266–282 (LTCIDMDWEVLTWLRYT) the chain is Cytoplasmic. A helical membrane pass occupies residues 283–303 (LWIPLYPLGCLAEAVSVVQSI). Residues Tyr-288 and Glu-295 contribute to the active site. Residues 304–324 (PIFNETGRFSFTLPYPVKIKV) lie on the Lumenal side of the membrane. A helical membrane pass occupies residues 325 to 345 (RFSFFLQIYLIMIFLGLYINF). The Cytoplasmic segment spans residues 346 to 364 (RHLYKQRRRRYGQKKKKIH).

Belongs to the very long-chain fatty acids dehydratase HACD family. As to quaternary structure, may interact with enzymes of the ELO family (including ELOVL1); with those enzymes that mediate condensation, the first of the four steps of the reaction cycle responsible for fatty acids elongation, may be part of a larger fatty acids elongase complex. Interacts with RAC1.

Its subcellular location is the endoplasmic reticulum membrane. The enzyme catalyses a very-long-chain (3R)-3-hydroxyacyl-CoA = a very-long-chain (2E)-enoyl-CoA + H2O. It carries out the reaction (3R)-hydroxyhexadecanoyl-CoA = (2E)-hexadecenoyl-CoA + H2O. Its pathway is lipid metabolism; fatty acid biosynthesis. Functionally, catalyzes the third of the four reactions of the long-chain fatty acids elongation cycle. This endoplasmic reticulum-bound enzymatic process, allows the addition of two carbons to the chain of long- and very long-chain fatty acids/VLCFAs per cycle. This enzyme catalyzes the dehydration of the 3-hydroxyacyl-CoA intermediate into trans-2,3-enoyl-CoA, within each cycle of fatty acid elongation. Thereby, it participates in the production of VLCFAs of different chain lengths that are involved in multiple biological processes as precursors of membrane lipids and lipid mediators. Involved in Rac1-signaling pathways leading to the modulation of gene expression. This chain is Very-long-chain (3R)-3-hydroxyacyl-CoA dehydratase 3, found in Pongo abelii (Sumatran orangutan).